The primary structure comprises 279 residues: NAD kinase (279 aa).

Asp61 functions as the Proton acceptor in the catalytic mechanism. NAD(+) contacts are provided by residues 61–62, 138–139, Lys149, Lys166, Asp168, and 179–184; these read DG, ND, and TGYSFS.

The protein belongs to the NAD kinase family. The cofactor is a divalent metal cation.

Its subcellular location is the cytoplasm. It carries out the reaction NAD(+) + ATP = ADP + NADP(+) + H(+). Functionally, involved in the regulation of the intracellular balance of NAD and NADP, and is a key enzyme in the biosynthesis of NADP. Catalyzes specifically the phosphorylation on 2'-hydroxyl of the adenosine moiety of NAD to yield NADP. The sequence is that of NAD kinase from Borrelia garinii subsp. bavariensis (strain ATCC BAA-2496 / DSM 23469 / PBi) (Borreliella bavariensis).